The chain runs to 273 residues: Dermonecrotic toxin LarSicTox-alphaIB1aiv (273 aa).

The active site involves His-5. Glu-25 and Asp-27 together coordinate Mg(2+). Catalysis depends on His-41, which acts as the Nucleophile. 2 disulfides stabilise this stretch: Cys-45–Cys-51 and Cys-47–Cys-190. Asp-85 contributes to the Mg(2+) binding site. A glycan (N-linked (GlcNAc...) asparagine) is linked at Asn-250.

The protein belongs to the arthropod phospholipase D family. Class II subfamily. The cofactor is Mg(2+). Expressed by the venom gland.

The protein resides in the secreted. It catalyses the reaction an N-(acyl)-sphingosylphosphocholine = an N-(acyl)-sphingosyl-1,3-cyclic phosphate + choline. The catalysed reaction is an N-(acyl)-sphingosylphosphoethanolamine = an N-(acyl)-sphingosyl-1,3-cyclic phosphate + ethanolamine. The enzyme catalyses a 1-acyl-sn-glycero-3-phosphocholine = a 1-acyl-sn-glycero-2,3-cyclic phosphate + choline. It carries out the reaction a 1-acyl-sn-glycero-3-phosphoethanolamine = a 1-acyl-sn-glycero-2,3-cyclic phosphate + ethanolamine. Its function is as follows. Dermonecrotic toxins cleave the phosphodiester linkage between the phosphate and headgroup of certain phospholipids (sphingolipid and lysolipid substrates), forming an alcohol (often choline) and a cyclic phosphate. This toxin acts on sphingomyelin (SM). It may also act on ceramide phosphoethanolamine (CPE), lysophosphatidylcholine (LPC) and lysophosphatidylethanolamine (LPE), but not on lysophosphatidylserine (LPS), and lysophosphatidylglycerol (LPG). It acts by transphosphatidylation, releasing exclusively cyclic phosphate products as second products. Induces dermonecrosis, hemolysis, increased vascular permeability, edema, inflammatory response, and platelet aggregation. The protein is Dermonecrotic toxin LarSicTox-alphaIB1aiv of Loxosceles arizonica (Arizona brown spider).